We begin with the raw amino-acid sequence, 1770 residues long: Probable outer membrane protein PmpC (1770 aa).

The signal sequence occupies residues 1–20 (MKFMSATAVFAAALSSVTEA). Disordered regions lie at residues 73–109 (LPRK…ELDN), 264–311 (EDTL…GKGG), 481–505 (PAAP…TNSD), 611–818 (ESTP…STTE), and 1271–1329 (LRII…TSRT). Positions 85–97 (SPTTEGVSSSSSG) are enriched in low complexity. Residues 268–285 (DSTPETEQTESNGNQDGS) are compositionally biased toward polar residues. Composition is skewed to low complexity over residues 294 to 303 (SESPESTPSP) and 496 to 505 (QTETSDTNSD). 2 stretches are compositionally biased toward polar residues: residues 631–675 (TEDP…TGNA) and 682–703 (QDST…QSNE). Low complexity-rich tracts occupy residues 719–748 (ESVS…GDQS) and 762–802 (STDS…GDSA). Residues 1303 to 1319 (NNDASNQGESANGSSSP) are compositionally biased toward polar residues. One can recognise an Autotransporter domain in the interval 1477 to 1770 (EEVSYNNLWI…MMNCGARMTF (294 aa)).

This sequence belongs to the PMP outer membrane protein family.

The protein resides in the secreted. Its subcellular location is the cell wall. The protein localises to the cell outer membrane. This is Probable outer membrane protein PmpC (pmpC) from Chlamydia trachomatis serovar D (strain ATCC VR-885 / DSM 19411 / UW-3/Cx).